The sequence spans 174 residues: Protein FanG (174 aa).

The signal sequence occupies residues 1-21; that stretch reads MKKLYKAITVICILMSNLQSA. A disulfide bond links Cys41 and Cys75.

It is found in the fimbrium. Functionally, involved in the biosynthesis of K99 fimbriae. This chain is Protein FanG (fanG), found in Escherichia coli.